Consider the following 279-residue polypeptide: Release factor glutamine methyltransferase (279 aa).

Positions 141 and 187 each coordinate S-adenosyl-L-methionine. Residue 187-190 coordinates substrate; the sequence is NPPY.

It belongs to the protein N5-glutamine methyltransferase family. PrmC subfamily.

The catalysed reaction is L-glutaminyl-[peptide chain release factor] + S-adenosyl-L-methionine = N(5)-methyl-L-glutaminyl-[peptide chain release factor] + S-adenosyl-L-homocysteine + H(+). Functionally, methylates the class 1 translation termination release factors RF1/PrfA and RF2/PrfB on the glutamine residue of the universally conserved GGQ motif. The chain is Release factor glutamine methyltransferase from Corynebacterium glutamicum (strain ATCC 13032 / DSM 20300 / JCM 1318 / BCRC 11384 / CCUG 27702 / LMG 3730 / NBRC 12168 / NCIMB 10025 / NRRL B-2784 / 534).